Reading from the N-terminus, the 182-residue chain is Adenine phosphoribosyltransferase (182 aa).

This sequence belongs to the purine/pyrimidine phosphoribosyltransferase family. As to quaternary structure, homodimer.

It localises to the cytoplasm. It carries out the reaction AMP + diphosphate = 5-phospho-alpha-D-ribose 1-diphosphate + adenine. It participates in purine metabolism; AMP biosynthesis via salvage pathway; AMP from adenine: step 1/1. Catalyzes a salvage reaction resulting in the formation of AMP, that is energically less costly than de novo synthesis. This is Adenine phosphoribosyltransferase from Pseudomonas aeruginosa (strain LESB58).